Here is a 504-residue protein sequence, read N- to C-terminus: 2,3-bisphosphoglycerate-independent phosphoglycerate mutase (504 aa).

Residues Asp9 and Ser59 each contribute to the Mn(2+) site. Ser59 (phosphoserine intermediate) is an active-site residue. Substrate is bound by residues His120, 149 to 150 (RD), Arg181, Arg187, 253 to 256 (RPDR), and Lys326. Residues Asp393, His397, Asp434, His435, and His451 each contribute to the Mn(2+) site.

Belongs to the BPG-independent phosphoglycerate mutase family. Requires Mn(2+) as cofactor.

It carries out the reaction (2R)-2-phosphoglycerate = (2R)-3-phosphoglycerate. Its pathway is carbohydrate degradation; glycolysis; pyruvate from D-glyceraldehyde 3-phosphate: step 3/5. Its function is as follows. Catalyzes the interconversion of 2-phosphoglycerate and 3-phosphoglycerate. This Haloquadratum walsbyi (strain DSM 16790 / HBSQ001) protein is 2,3-bisphosphoglycerate-independent phosphoglycerate mutase.